The sequence spans 546 residues: Chaperonin GroEL (546 aa).

Residues 29-32, lysine 50, 86-90, glycine 415, and aspartate 495 each bind ATP; these read TLGP and DGTTT.

The protein belongs to the chaperonin (HSP60) family. Forms a cylinder of 14 subunits composed of two heptameric rings stacked back-to-back. Interacts with the co-chaperonin GroES.

The protein resides in the cytoplasm. It carries out the reaction ATP + H2O + a folded polypeptide = ADP + phosphate + an unfolded polypeptide.. Together with its co-chaperonin GroES, plays an essential role in assisting protein folding. The GroEL-GroES system forms a nano-cage that allows encapsulation of the non-native substrate proteins and provides a physical environment optimized to promote and accelerate protein folding. This Parabacteroides distasonis (strain ATCC 8503 / DSM 20701 / CIP 104284 / JCM 5825 / NCTC 11152) protein is Chaperonin GroEL.